We begin with the raw amino-acid sequence, 118 residues long: Putative pterin-4-alpha-carbinolamine dehydratase (118 aa).

It belongs to the pterin-4-alpha-carbinolamine dehydratase family.

The enzyme catalyses (4aS,6R)-4a-hydroxy-L-erythro-5,6,7,8-tetrahydrobiopterin = (6R)-L-erythro-6,7-dihydrobiopterin + H2O. This is Putative pterin-4-alpha-carbinolamine dehydratase from Pseudomonas putida (strain GB-1).